Consider the following 590-residue polypeptide: Probable serine/threonine-protein phosphatase PP2A regulatory subunit (590 aa).

14 HEAT repeats span residues 37–73, 74–111, 113–150, 151–188, 189–227, 228–266, 267–305, 306–344, 349–387, 388–426, 427–465, 466–504, 505–543, and 544–582; these read LSTI…VLAE, QLGN…DKAV, SLRK…TSAC, GLFS…RAAA, AKLG…LLTV, ESAI…YMVA, EKLI…CAAT, QRLQ…QLVK, GVIM…LNII, SSLD…LAIV, QFMP…EAST, LIMK…MTCL, FCLN…FNAA, and KSLK…YFSE.

It belongs to the phosphatase 2A regulatory subunit A family. In terms of assembly, part of a complex consisting of a common heterodimeric core enzyme, composed of catalytic subunit let-92 and constant regulatory subunit paa-1, that associates with a variety of regulatory subunits which confer distinct properties to the holoenzyme. Interacts with rsa-1.

Its subcellular location is the cytoplasm. The protein resides in the cytoskeleton. The protein localises to the microtubule organizing center. It is found in the centrosome. It localises to the spindle. In terms of biological role, acts as a scaffolding protein for phosphatase let-92 and its regulatory subunits. Probably together with let-92 and regulatory subunit sur-6, regulates centriole duplication, microtubule outgrowth and mitotic spindle stability during early embryonic cell division by preventing the degradation of sas-5 and kinase zyg-1. During vulva development, may play a role with phosphatase let-92 and regulatory subunit sur-6 in the induction of vulva cell precursors by positively regulating let-60/Ras-MAP kinase signaling, probably by promoting lin-45 activation. Plays a positive role in axon guidance probably by inhibiting phosphatase let-92. This chain is Probable serine/threonine-protein phosphatase PP2A regulatory subunit (paa-1), found in Caenorhabditis elegans.